Reading from the N-terminus, the 265-residue chain is Thiazole synthase (265 aa).

Lys106 (schiff-base intermediate with DXP) is an active-site residue. Residues Gly167, 193–194 (AG), and 215–216 (NS) contribute to the 1-deoxy-D-xylulose 5-phosphate site.

This sequence belongs to the ThiG family. As to quaternary structure, homotetramer. Forms heterodimers with either ThiH or ThiS.

Its subcellular location is the cytoplasm. It carries out the reaction [ThiS sulfur-carrier protein]-C-terminal-Gly-aminoethanethioate + 2-iminoacetate + 1-deoxy-D-xylulose 5-phosphate = [ThiS sulfur-carrier protein]-C-terminal Gly-Gly + 2-[(2R,5Z)-2-carboxy-4-methylthiazol-5(2H)-ylidene]ethyl phosphate + 2 H2O + H(+). It functions in the pathway cofactor biosynthesis; thiamine diphosphate biosynthesis. Catalyzes the rearrangement of 1-deoxy-D-xylulose 5-phosphate (DXP) to produce the thiazole phosphate moiety of thiamine. Sulfur is provided by the thiocarboxylate moiety of the carrier protein ThiS. In vitro, sulfur can be provided by H(2)S. The protein is Thiazole synthase of Prochlorococcus marinus (strain MIT 9515).